We begin with the raw amino-acid sequence, 257 residues long: Phosphate import ATP-binding protein PstB (257 aa).

Residues 11–252 (IQVRDLNFYY…PAKKQTEDYI (242 aa)) form the ABC transporter domain. 43-50 (GPSGSGKS) serves as a coordination point for ATP.

Belongs to the ABC transporter superfamily. Phosphate importer (TC 3.A.1.7) family. As to quaternary structure, the complex is composed of two ATP-binding proteins (PstB), two transmembrane proteins (PstC and PstA) and a solute-binding protein (PstS).

The protein resides in the cell inner membrane. It catalyses the reaction phosphate(out) + ATP + H2O = ADP + 2 phosphate(in) + H(+). Its function is as follows. Part of the ABC transporter complex PstSACB involved in phosphate import. Responsible for energy coupling to the transport system. The protein is Phosphate import ATP-binding protein PstB of Salmonella choleraesuis (strain SC-B67).